A 122-amino-acid chain; its full sequence is Large ribosomal subunit protein uL14 (122 aa).

Belongs to the universal ribosomal protein uL14 family. In terms of assembly, part of the 50S ribosomal subunit. Forms a cluster with proteins L3 and L19. In the 70S ribosome, L14 and L19 interact and together make contacts with the 16S rRNA in bridges B5 and B8.

Binds to 23S rRNA. Forms part of two intersubunit bridges in the 70S ribosome. The sequence is that of Large ribosomal subunit protein uL14 from Nitratidesulfovibrio vulgaris (strain ATCC 29579 / DSM 644 / CCUG 34227 / NCIMB 8303 / VKM B-1760 / Hildenborough) (Desulfovibrio vulgaris).